A 637-amino-acid polypeptide reads, in one-letter code: Sterol 3-beta-glucosyltransferase UGT80A2 (637 aa).

Disordered regions lie at residues 1–29 and 66–112; these read MPEISPAELAKVSSSSSSSSSSSSGRASV and VAES…TERQ. Residues 13–24 are compositionally biased toward low complexity; the sequence is SSSSSSSSSSSS. Polar residues predominate over residues 67 to 79; it reads AESSGTGNKSFSR. Basic and acidic residues predominate over residues 103–112; the sequence is RLDKSKTERQ.

The protein belongs to the glycosyltransferase 28 family. In terms of tissue distribution, expressed in roots, cauline leaf epidermal cells, stomata, stamen, pollen and around the base of siliques.

It catalyses the reaction a sterol + UDP-alpha-D-glucose = a sterol 3-beta-D-glucoside + UDP + H(+). In terms of biological role, involved in the biosynthesis of sterol glucosides. Catalyzes the synthesis of steryl glycosides (SGs) and acyl steryl glycosides (ASGs) which are the most abundant sterol derivatives in higher plants. Can act on several sterols like sitosterol, campesterol and stigmasterol. Both UGT80A2 and UGT80B1 are required for the normal production of SGs and ASGs in seeds. This chain is Sterol 3-beta-glucosyltransferase UGT80A2 (UGT80A2), found in Arabidopsis thaliana (Mouse-ear cress).